The primary structure comprises 204 residues: Thioredoxin-like 4, chloroplastic (204 aa).

The transit peptide at 1–27 (MSSLLNISHCSYHGYSGLTSRGGINTV) directs the protein to the chloroplast. A Thioredoxin domain is found at 63-201 (AKSLSQENLV…IDAAILKYTS (139 aa)). Residues Cys-119 and Cys-122 each act as nucleophile in the active site. Cys-119 and Cys-122 are disulfide-bonded.

Belongs to the thioredoxin family.

It localises to the plastid. The protein localises to the chloroplast. Its function is as follows. Probable thiol-disulfide oxidoreductase that may participate in various redox reactions. This Arabidopsis thaliana (Mouse-ear cress) protein is Thioredoxin-like 4, chloroplastic.